Reading from the N-terminus, the 319-residue chain is 33 kDa chaperonin (319 aa).

Disulfide bonds link cysteine 239–cysteine 241 and cysteine 272–cysteine 275. The segment at 300 to 319 is disordered; that stretch reads EVSEEMKKAEEKEKEEKNKK.

The protein belongs to the HSP33 family. In terms of processing, under oxidizing conditions two disulfide bonds are formed involving the reactive cysteines. Under reducing conditions zinc is bound to the reactive cysteines and the protein is inactive.

It is found in the cytoplasm. Its function is as follows. Redox regulated molecular chaperone. Protects both thermally unfolding and oxidatively damaged proteins from irreversible aggregation. Plays an important role in the bacterial defense system toward oxidative stress. The protein is 33 kDa chaperonin of Clostridium perfringens (strain ATCC 13124 / DSM 756 / JCM 1290 / NCIMB 6125 / NCTC 8237 / Type A).